A 170-amino-acid polypeptide reads, in one-letter code: tRNA-splicing endonuclease (170 aa).

Active-site residues include Tyr110, His116, and Lys147.

Belongs to the tRNA-intron endonuclease family. Archaeal short subfamily. In terms of assembly, homotetramer; although the tetramer contains four active sites, only two participate in the cleavage. Therefore, it should be considered as a dimer of dimers.

It catalyses the reaction pretRNA = a 3'-half-tRNA molecule with a 5'-OH end + a 5'-half-tRNA molecule with a 2',3'-cyclic phosphate end + an intron with a 2',3'-cyclic phosphate and a 5'-hydroxyl terminus.. Functionally, endonuclease that removes tRNA introns. Cleaves pre-tRNA at the 5'- and 3'-splice sites to release the intron. The products are an intron and two tRNA half-molecules bearing 2',3' cyclic phosphate and 5'-OH termini. Recognizes a pseudosymmetric substrate in which 2 bulged loops of 3 bases are separated by a stem of 4 bp. This chain is tRNA-splicing endonuclease, found in Pyrococcus horikoshii (strain ATCC 700860 / DSM 12428 / JCM 9974 / NBRC 100139 / OT-3).